A 279-amino-acid polypeptide reads, in one-letter code: Ribosomal RNA small subunit methyltransferase A (279 aa).

S-adenosyl-L-methionine contacts are provided by His-11, Leu-13, Gly-42, Glu-63, Asp-88, and Asn-104.

Belongs to the class I-like SAM-binding methyltransferase superfamily. rRNA adenine N(6)-methyltransferase family. RsmA subfamily.

The protein localises to the cytoplasm. The enzyme catalyses adenosine(1518)/adenosine(1519) in 16S rRNA + 4 S-adenosyl-L-methionine = N(6)-dimethyladenosine(1518)/N(6)-dimethyladenosine(1519) in 16S rRNA + 4 S-adenosyl-L-homocysteine + 4 H(+). In terms of biological role, specifically dimethylates two adjacent adenosines (A1518 and A1519) in the loop of a conserved hairpin near the 3'-end of 16S rRNA in the 30S particle. May play a critical role in biogenesis of 30S subunits. The chain is Ribosomal RNA small subunit methyltransferase A from Synechococcus sp. (strain JA-3-3Ab) (Cyanobacteria bacterium Yellowstone A-Prime).